The primary structure comprises 117 residues: Large ribosomal subunit protein eL34 (117 aa).

Serine 12 bears the Phosphoserine mark. Positions 16–28 (ASNKTRLSRTPGQ) are enriched in polar residues. The segment at 16–35 (ASNKTRLSRTPGQQDRLPLH) is disordered. Lysine 108 is covalently cross-linked (Glycyl lysine isopeptide (Lys-Gly) (interchain with G-Cter in SUMO2)).

This sequence belongs to the eukaryotic ribosomal protein eL34 family. In terms of assembly, component of the large ribosomal subunit.

The protein localises to the cytoplasm. It localises to the cytosol. It is found in the endoplasmic reticulum. Functionally, component of the large ribosomal subunit. The ribosome is a large ribonucleoprotein complex responsible for the synthesis of proteins in the cell. The polypeptide is Large ribosomal subunit protein eL34 (RPL34) (Vicugna pacos (Alpaca)).